The following is a 320-amino-acid chain: Malate dehydrogenase (320 aa).

NAD(+)-binding positions include 10–15 (GSGMIG) and aspartate 34. Arginine 83 and arginine 89 together coordinate substrate. Residues asparagine 96 and 119-121 (ITN) contribute to the NAD(+) site. Substrate contacts are provided by asparagine 121 and arginine 152. Histidine 176 serves as the catalytic Proton acceptor.

Belongs to the LDH/MDH superfamily. MDH type 3 family.

It carries out the reaction (S)-malate + NAD(+) = oxaloacetate + NADH + H(+). In terms of biological role, catalyzes the reversible oxidation of malate to oxaloacetate. In Agrobacterium fabrum (strain C58 / ATCC 33970) (Agrobacterium tumefaciens (strain C58)), this protein is Malate dehydrogenase.